Reading from the N-terminus, the 228-residue chain is Leucyl/phenylalanyl-tRNA--protein transferase (228 aa).

It belongs to the L/F-transferase family.

It localises to the cytoplasm. It carries out the reaction N-terminal L-lysyl-[protein] + L-leucyl-tRNA(Leu) = N-terminal L-leucyl-L-lysyl-[protein] + tRNA(Leu) + H(+). The enzyme catalyses N-terminal L-arginyl-[protein] + L-leucyl-tRNA(Leu) = N-terminal L-leucyl-L-arginyl-[protein] + tRNA(Leu) + H(+). The catalysed reaction is L-phenylalanyl-tRNA(Phe) + an N-terminal L-alpha-aminoacyl-[protein] = an N-terminal L-phenylalanyl-L-alpha-aminoacyl-[protein] + tRNA(Phe). In terms of biological role, functions in the N-end rule pathway of protein degradation where it conjugates Leu, Phe and, less efficiently, Met from aminoacyl-tRNAs to the N-termini of proteins containing an N-terminal arginine or lysine. This Sulfurimonas denitrificans (strain ATCC 33889 / DSM 1251) (Thiomicrospira denitrificans (strain ATCC 33889 / DSM 1251)) protein is Leucyl/phenylalanyl-tRNA--protein transferase.